Reading from the N-terminus, the 377-residue chain is DnaJ-related protein SCJ1 (377 aa).

Residues 1-21 (MIPKLYIHLILSLLLLPLILA) form the signal peptide. In terms of domain architecture, J spans 23–88 (DYYAILEIDK…EKKKIYDQFG (66 aa)). The CR-type zinc finger occupies 156–237 (GSSIEFTLNL…CHGKKVTKKN (82 aa)). 4 CXXCXGXG motif repeats span residues 169–176 (CDACHGSG), 185–192 (CPDCQGRG), 211–218 (CGRCGGTG), and 225–232 (CKTCHGKK). The short motif at 288–290 (RGD) is the Cell attachment site element. The Prevents secretion from ER motif lies at 374–377 (KDEL).

It is found in the endoplasmic reticulum lumen. Its function is as follows. Regulates protein folding in the endoplasmic reticulum lumen. Probably acts as a J-protein for the Hsp70-type chaperone KAR2 by stimulating its ATP-dependent reaction cycle and initiating folding reactions. Also involved in the endoplasmic reticulum-associated degradation (ERAD) process. Cooperates with KAR2 and another J-protein JEM1 to facilitate the export of ERAD substrates to the cytoplasm by maintaining them in a translocation-competent state and preventing their aggregation in the endoplasmic reticulum lumen. This Saccharomyces cerevisiae (strain ATCC 204508 / S288c) (Baker's yeast) protein is DnaJ-related protein SCJ1 (SCJ1).